The primary structure comprises 246 residues: E3 ubiquitin-protein ligase MARCHF2 (246 aa).

An RING-CH-type zinc finger spans residues 56–116; the sequence is DTPSDCPFCR…ELCHTEFAVE (61 aa). Zn(2+) contacts are provided by Cys64, Cys67, Cys80, Cys82, His90, Cys93, Cys106, and Cys109. Positions 121-246 are required for interaction with IKBKG; it reads PLTEWLKDPG…LKKVAEETPV (126 aa). 2 consecutive transmembrane segments (helical) span residues 138–158 and 175–195; these read LCCDMVCFVFITPLAAISGWL and AVGLIALTIALFTIYVLWTLV.

In terms of assembly, interacts with STX6; the interaction promotes MARCHF2-mediated ubiquitination and degradation of CFTR. Interacts with MARCHF3. Interacts with GOPC/CAL; the interaction leads to CFTR ubiquitination and degradation. Interacts with CFTR; the interaction leads to CFTR ubiqtuitination and degradation. Interacts (via PDZ domain) with DLG1 (via PDZ domains); the interaction leads to DLG1 ubiqtuitination and degradation. Interacts with ERGIC3. Interacts with ADRB2. Interacts with IKBKG/NEMO; during the late stages of macrophage viral and bacterial infection; the interaction leads to ubiquitination and degradation of IKBKG/NEMO. In terms of tissue distribution, ubiquitously expressed. Present in liver (at protein level).

The protein localises to the endoplasmic reticulum membrane. It localises to the lysosome membrane. The protein resides in the endosome membrane. Its subcellular location is the golgi apparatus membrane. It is found in the cytoplasm. The protein localises to the cell membrane. It carries out the reaction S-ubiquitinyl-[E2 ubiquitin-conjugating enzyme]-L-cysteine + [acceptor protein]-L-lysine = [E2 ubiquitin-conjugating enzyme]-L-cysteine + N(6)-ubiquitinyl-[acceptor protein]-L-lysine.. It participates in protein modification; protein ubiquitination. Functionally, E3 ubiquitin-protein ligase that may mediate ubiquitination of TFRC and CD86, and promote their subsequent endocytosis and sorting to lysosomes via multivesicular bodies. E3 ubiquitin ligases accept ubiquitin from an E2 ubiquitin-conjugating enzyme in the form of a thioester and then directly transfer the ubiquitin to targeted substrates. Together with GOPC/CAL mediates the ubiquitination and lysosomal degradation of CFTR. Ubiquitinates and therefore mediates the degradation of DLG1. Regulates the intracellular trafficking and secretion of alpha1-antitrypsin/SERPINA1 and HP/haptoglobin via ubiquitination and degradation of the cargo receptor ERGIC3. Negatively regulates the antiviral and antibacterial immune response by repression of the NF-kB and type 1 IFN signaling pathways, via MARCHF2-mediated K48-linked polyubiquitination of IKBKG/NEMO, resulting in its proteasomal degradation. May be involved in endosomal trafficking through interaction with STX6. The protein is E3 ubiquitin-protein ligase MARCHF2 (Marchf2) of Rattus norvegicus (Rat).